The chain runs to 299 residues: ATP phosphoribosyltransferase (299 aa).

This sequence belongs to the ATP phosphoribosyltransferase family. Long subfamily. In terms of assembly, equilibrium between an active dimeric form, an inactive hexameric form and higher aggregates. Interconversion between the various forms is largely reversible and is influenced by the natural substrates and inhibitors of the enzyme. It depends on Mg(2+) as a cofactor.

The protein localises to the cytoplasm. The catalysed reaction is 1-(5-phospho-beta-D-ribosyl)-ATP + diphosphate = 5-phospho-alpha-D-ribose 1-diphosphate + ATP. Its pathway is amino-acid biosynthesis; L-histidine biosynthesis; L-histidine from 5-phospho-alpha-D-ribose 1-diphosphate: step 1/9. Its activity is regulated as follows. Feedback inhibited by histidine. In terms of biological role, catalyzes the condensation of ATP and 5-phosphoribose 1-diphosphate to form N'-(5'-phosphoribosyl)-ATP (PR-ATP). Has a crucial role in the pathway because the rate of histidine biosynthesis seems to be controlled primarily by regulation of HisG enzymatic activity. The sequence is that of ATP phosphoribosyltransferase (hisG) from Buchnera aphidicola subsp. Schizaphis graminum (strain Sg).